Here is a 168-residue protein sequence, read N- to C-terminus: G/U mismatch-specific DNA glycosylase (168 aa).

It belongs to the uracil-DNA glycosylase (UDG) superfamily. TDG/mug family. As to quaternary structure, binds DNA as a monomer.

It is found in the cytoplasm. The enzyme catalyses Specifically hydrolyzes mismatched double-stranded DNA and polynucleotides, releasing free uracil.. Excises ethenocytosine and uracil, which can arise by alkylation or deamination of cytosine, respectively, from the corresponding mispairs with guanine in ds-DNA. It is capable of hydrolyzing the carbon-nitrogen bond between the sugar-phosphate backbone of the DNA and the mispaired base. The complementary strand guanine functions in substrate recognition. Required for DNA damage lesion repair in stationary-phase cells. This Escherichia coli O157:H7 (strain EC4115 / EHEC) protein is G/U mismatch-specific DNA glycosylase.